Here is a 69-residue protein sequence, read N- to C-terminus: Sperm protamine P1 (69 aa).

2 stretches are compositionally biased toward basic residues: residues 1-30 and 37-69; these read MARFRPSRSRSRSLYRRRRRSRRQRSRRGG and KITRRGRGRGKSRRRRGRRSMRSSRRRRRRRRN. A disordered region spans residues 1-69; that stretch reads MARFRPSRSR…SRRRRRRRRN (69 aa).

The protein belongs to the protamine P1 family. In terms of tissue distribution, testis.

Its subcellular location is the nucleus. The protein localises to the chromosome. Protamines substitute for histones in the chromatin of sperm during the haploid phase of spermatogenesis. They compact sperm DNA into a highly condensed, stable and inactive complex. This is Sperm protamine P1 (PRM1) from Tachyglossus aculeatus aculeatus (Southeast Australian short-beaked echidna).